The sequence spans 76 residues: MSRVCEICGKGTVKANRITRRGKAKKEGGVGKHITKTSRRRQKPNLVKVKAIVDGRPKRIKVCTKCLKSGRVERAY.

Residues 21–42 form a disordered region; it reads RGKAKKEGGVGKHITKTSRRRQ. Residues 33–42 show a composition bias toward basic residues; that stretch reads HITKTSRRRQ.

This sequence belongs to the bacterial ribosomal protein bL28 family.

The chain is Large ribosomal subunit protein bL28 from Halothermothrix orenii (strain H 168 / OCM 544 / DSM 9562).